Consider the following 124-residue polypeptide: Ribonuclease pancreatic (124 aa).

Positions K1–M13 are enriched in basic and acidic residues. Residues K1–N24 form a disordered region. Residues K7 and R10 each coordinate substrate. The active-site Proton acceptor is the H12. 4 disulfides stabilise this stretch: C26/C84, C40/C95, C58/C110, and C65/C72. Residues K41–T45, K66, and R85 contribute to the substrate site. The active-site Proton donor is the H119.

Belongs to the pancreatic ribonuclease family. As to quaternary structure, monomer. Interacts with and forms tight 1:1 complexes with RNH1. Dimerization of two such complexes may occur. Interaction with RNH1 inhibits this protein. In terms of tissue distribution, pancreas.

It localises to the secreted. It catalyses the reaction an [RNA] containing cytidine + H2O = an [RNA]-3'-cytidine-3'-phosphate + a 5'-hydroxy-ribonucleotide-3'-[RNA].. It carries out the reaction an [RNA] containing uridine + H2O = an [RNA]-3'-uridine-3'-phosphate + a 5'-hydroxy-ribonucleotide-3'-[RNA].. Functionally, endonuclease that catalyzes the cleavage of RNA on the 3' side of pyrimidine nucleotides. Acts on single-stranded and double-stranded RNA. This Dama dama (Fallow deer) protein is Ribonuclease pancreatic (RNASE1).